We begin with the raw amino-acid sequence, 249 residues long: Type III pantothenate kinase (249 aa).

6–13 (DCGNSFIK) provides a ligand contact to ATP. Substrate is bound by residues Y93 and 100 to 103 (GLDR). The Proton acceptor role is filled by D102. D122 contacts K(+). T125 is an ATP binding site. Substrate is bound at residue T181.

This sequence belongs to the type III pantothenate kinase family. Homodimer. Requires NH4(+) as cofactor. The cofactor is K(+).

It localises to the cytoplasm. The catalysed reaction is (R)-pantothenate + ATP = (R)-4'-phosphopantothenate + ADP + H(+). It participates in cofactor biosynthesis; coenzyme A biosynthesis; CoA from (R)-pantothenate: step 1/5. Catalyzes the phosphorylation of pantothenate (Pan), the first step in CoA biosynthesis. This is Type III pantothenate kinase from Pseudomonas fluorescens (strain Pf0-1).